We begin with the raw amino-acid sequence, 224 residues long: Transcriptional regulatory protein CiaR (224 aa).

Residues 3-116 (KILLVEDDLG…ELKMRIQALL (114 aa)) form the Response regulatory domain. 4-aspartylphosphate is present on D51. The segment at residues 124–222 (ENTLTYGNIV…LRSVGYLLKD (99 aa)) is a DNA-binding region (ompR/PhoB-type).

Post-translationally, phosphorylated by CiaH.

Its subcellular location is the cytoplasm. Functionally, member of the two-component regulatory system CiaH/CiaR. Involved in early steps of competence regulation and in penicillin susceptibility. This is Transcriptional regulatory protein CiaR (ciaR) from Streptococcus pneumoniae (strain ATCC BAA-255 / R6).